The chain runs to 285 residues: Polyamine aminopropyltransferase (285 aa).

The PABS domain occupies 5-241 (QDWFTESYPD…GWWSATMAGK (237 aa)). S-methyl-5'-thioadenosine is bound at residue glutamine 35. Spermidine contacts are provided by histidine 66 and aspartate 90. Residues aspartate 110 and 141–142 (DG) contribute to the S-methyl-5'-thioadenosine site. Aspartate 160 serves as the catalytic Proton acceptor. Spermidine is bound at residue 160–163 (DSTD). Proline 167 lines the S-methyl-5'-thioadenosine pocket.

Belongs to the spermidine/spermine synthase family. As to quaternary structure, homodimer or homotetramer.

Its subcellular location is the cytoplasm. It carries out the reaction S-adenosyl 3-(methylsulfanyl)propylamine + putrescine = S-methyl-5'-thioadenosine + spermidine + H(+). Its pathway is amine and polyamine biosynthesis; spermidine biosynthesis; spermidine from putrescine: step 1/1. In terms of biological role, catalyzes the irreversible transfer of a propylamine group from the amino donor S-adenosylmethioninamine (decarboxy-AdoMet) to putrescine (1,4-diaminobutane) to yield spermidine. This is Polyamine aminopropyltransferase from Methylococcus capsulatus (strain ATCC 33009 / NCIMB 11132 / Bath).